Consider the following 190-residue polypeptide: Protein GrpE (190 aa).

Basic and acidic residues predominate over residues 1–26 (MADKEKDAVIVDETEHVDVDSKESKK). The interval 1–31 (MADKEKDAVIVDETEHVDVDSKESKKEKKTK) is disordered.

This sequence belongs to the GrpE family. In terms of assembly, homodimer.

The protein localises to the cytoplasm. Functionally, participates actively in the response to hyperosmotic and heat shock by preventing the aggregation of stress-denatured proteins, in association with DnaK and GrpE. It is the nucleotide exchange factor for DnaK and may function as a thermosensor. Unfolded proteins bind initially to DnaJ; upon interaction with the DnaJ-bound protein, DnaK hydrolyzes its bound ATP, resulting in the formation of a stable complex. GrpE releases ADP from DnaK; ATP binding to DnaK triggers the release of the substrate protein, thus completing the reaction cycle. Several rounds of ATP-dependent interactions between DnaJ, DnaK and GrpE are required for fully efficient folding. This is Protein GrpE from Acholeplasma laidlawii (strain PG-8A).